A 381-amino-acid polypeptide reads, in one-letter code: Neuropeptide Y receptor type 2 (381 aa).

The disordered stretch occupies residues 1–35 (MGPIGTEADENQTVEEMKVEQYGPQTTPRGELVPD). At 1 to 51 (MGPIGTEADENQTVEEMKVEQYGPQTTPRGELVPDPEPELIDSTKLIEVQV) the chain is on the extracellular side. Asn-11 carries an N-linked (GlcNAc...) asparagine glycan. A helical transmembrane segment spans residues 52-72 (VLILAYCSIILLGVIGNSLVI). At 73–86 (HVVIKFKSMRTVTN) the chain is on the cytoplasmic side. Residues 87–107 (FFIANLAVADLVVNTLCLPFT) form a helical membrane-spanning segment. Residues 108-124 (LTYTLMGEWKMGPVLCH) lie on the Extracellular side of the membrane. Cysteines 123 and 203 form a disulfide. Residues 125–145 (LVPYAQGLAVQVSTITLTVIA) form a helical membrane-spanning segment. Residues 146–165 (LDRHRCIVYHLESKISKRIS) are Cytoplasmic-facing. A helical transmembrane segment spans residues 166-186 (FLIIGLAWGISALLASPLAIF). Residues 187 to 216 (REYSLIEIIPDFEIVACTEKWPGEEKSIYG) are Extracellular-facing. A helical transmembrane segment spans residues 217 to 237 (TVYSLSSLLILYVLPLGIISF). Over 238-268 (SYTRIWSKLKSHVSPGAANDHYHQRRQKTTK) the chain is Cytoplasmic. A helical transmembrane segment spans residues 269-289 (MLVCVVVVFAVSWLPLHAFQL). Residues 290–304 (AVDIDSHVLDLKEYK) lie on the Extracellular side of the membrane. The chain crosses the membrane as a helical span at residues 305-325 (LIFTVFHIIAMCSTFANPLLY). Topologically, residues 326 to 381 (GWMNSNYRKAFLSAFRCEQRLDAIHSEVSVTFKAKKNLEVRKNSGPNDSFTEATNV) are cytoplasmic. The S-palmitoyl cysteine moiety is linked to residue Cys-342.

Belongs to the G-protein coupled receptor 1 family.

It is found in the cell membrane. Its function is as follows. Receptor for neuropeptide Y and peptide YY. The protein is Neuropeptide Y receptor type 2 (NPY2R) of Macaca mulatta (Rhesus macaque).